Here is a 426-residue protein sequence, read N- to C-terminus: Mediator of RNA polymerase II transcription subunit 1 (426 aa).

Residues 324–356 (VGDAPAPAAQPPLHRRRSSNKGCRRASAAESAT) form a disordered region. The span at 336–347 (LHRRRSSNKGCR) shows a compositional bias: basic residues.

It belongs to the Mediator complex subunit 1 family. Component of the Mediator complex.

It is found in the nucleus. In terms of biological role, component of the Mediator complex, a coactivator involved in the regulated transcription of nearly all RNA polymerase II-dependent genes. Mediator functions as a bridge to convey information from gene-specific regulatory proteins to the basal RNA polymerase II transcription machinery. Mediator is recruited to promoters by direct interactions with regulatory proteins and serves as a scaffold for the assembly of a functional preinitiation complex with RNA polymerase II and the general transcription factors. The polypeptide is Mediator of RNA polymerase II transcription subunit 1 (MED1) (Eremothecium gossypii (strain ATCC 10895 / CBS 109.51 / FGSC 9923 / NRRL Y-1056) (Yeast)).